The primary structure comprises 414 residues: xyloglucan O-acetyltransferase 2 (414 aa).

At 1-26 (MKSSSSIFRETSEKKSERWMMMNIGR) the chain is on the cytoplasmic side. Residues 27 to 47 (FSPFFLSSFCITLFFTGFFVY) form a helical; Signal-anchor for type II membrane protein membrane-spanning segment. The Lumenal segment spans residues 48–414 (QNPFKSIADQ…FLMAIIRQLR (367 aa)). 4 disulfides stabilise this stretch: Cys70–Cys120, Cys91–Cys156, Cys100–Cys394, and Cys317–Cys390. N-linked (GlcNAc...) asparagine glycosylation is present at Asn88. A GDS motif motif is present at residues 143–145 (GDS). Ser145 (nucleophile) is an active-site residue. Asn205, Asn263, and Asn308 each carry an N-linked (GlcNAc...) asparagine glycan. Asp389 (proton donor) is an active-site residue. A DXXH motif motif is present at residues 389–392 (DCVH). Catalysis depends on His392, which acts as the Proton acceptor.

Belongs to the PC-esterase family. TBL subfamily.

Its subcellular location is the membrane. Functionally, xyloglucan acetyltransferase that catalyzes the acetylation of fucosylated Gal residues on xyloglucan side chains. Predominantly catalyze 6-O-monoacetylation of Gal residues in the Fuc-Gal-Xyl trisaccharide side chains of xyloglucan oligomers. Involved in xyloglucan specific O-acetylation in seeds. This Arabidopsis thaliana (Mouse-ear cress) protein is xyloglucan O-acetyltransferase 2.